Consider the following 563-residue polypeptide: Coiled-coil domain-containing protein 38 (563 aa).

Coiled coils occupy residues 129–212 (KRNT…KTEF), 384–415 (NIEF…RSRL), and 485–522 (ERMK…AVAQ). The disordered stretch occupies residues 521-550 (AQPKKKLGRRLVYHSKPPSANKQQLPLVNE). Over residues 523 to 533 (PKKKLGRRLVY) the composition is skewed to basic residues.

As to quaternary structure, interacts with CCDC42, CFAP53, IFT88 and ODF2. Interacts with CCDC146. Interacts with TEKT3. Interacts with ubiquitinated histone H2A.

The protein localises to the cytoplasm. It localises to the cytoskeleton. Its subcellular location is the microtubule organizing center. The protein resides in the centrosome. It is found in the perinuclear region. The protein localises to the cell projection. It localises to the cilium. Its subcellular location is the flagellum. Essential for male fertility. Required for sperm flagellum biogenesis. Also required for acrosome biogenesis. Required for the attachment of developing acrosomes to the nucleus during spermiogenesis and may be involved in the transport of fibrous sheath components. This is Coiled-coil domain-containing protein 38 (CCDC38) from Macaca fascicularis (Crab-eating macaque).